Reading from the N-terminus, the 241-residue chain is Carboxy-S-adenosyl-L-methionine synthase (241 aa).

S-adenosyl-L-methionine is bound by residues Y38, 63-65 (GCS), 88-89 (DN), 116-117 (DI), N131, and R198.

This sequence belongs to the class I-like SAM-binding methyltransferase superfamily. Cx-SAM synthase family. As to quaternary structure, homodimer.

It catalyses the reaction prephenate + S-adenosyl-L-methionine = carboxy-S-adenosyl-L-methionine + 3-phenylpyruvate + H2O. Its function is as follows. Catalyzes the conversion of S-adenosyl-L-methionine (SAM) to carboxy-S-adenosyl-L-methionine (Cx-SAM). In Haemophilus influenzae (strain PittGG), this protein is Carboxy-S-adenosyl-L-methionine synthase.